The chain runs to 228 residues: Lipoprotein-releasing system ATP-binding protein LolD (228 aa).

The region spanning Leu-9–Arg-228 is the ABC transporter domain. Gly-44–Ser-51 contributes to the ATP binding site.

It belongs to the ABC transporter superfamily. Lipoprotein translocase (TC 3.A.1.125) family. The complex is composed of two ATP-binding proteins (LolD) and two transmembrane proteins (LolC and LolE).

The protein resides in the cell inner membrane. In terms of biological role, part of the ABC transporter complex LolCDE involved in the translocation of mature outer membrane-directed lipoproteins, from the inner membrane to the periplasmic chaperone, LolA. Responsible for the formation of the LolA-lipoprotein complex in an ATP-dependent manner. The chain is Lipoprotein-releasing system ATP-binding protein LolD from Protochlamydia amoebophila (strain UWE25).